Reading from the N-terminus, the 81-residue chain is Photosystem I iron-sulfur center (81 aa).

4Fe-4S ferredoxin-type domains lie at 2 to 31 (SHSVKIYDTCIGCTQCVRACPTDVLEMIPW) and 39 to 68 (IASAPRTEDCVGCKRCESACPTDFLSVRVY). Residues cysteine 11, cysteine 14, cysteine 17, cysteine 21, cysteine 48, cysteine 51, cysteine 54, and cysteine 58 each contribute to the [4Fe-4S] cluster site.

As to quaternary structure, the eukaryotic PSI reaction center is composed of at least 11 subunits. It depends on [4Fe-4S] cluster as a cofactor.

Its subcellular location is the plastid. The protein resides in the chloroplast thylakoid membrane. It catalyses the reaction reduced [plastocyanin] + hnu + oxidized [2Fe-2S]-[ferredoxin] = oxidized [plastocyanin] + reduced [2Fe-2S]-[ferredoxin]. In terms of biological role, apoprotein for the two 4Fe-4S centers FA and FB of photosystem I (PSI); essential for photochemical activity. FB is the terminal electron acceptor of PSI, donating electrons to ferredoxin. The C-terminus interacts with PsaA/B/D and helps assemble the protein into the PSI complex. Required for binding of PsaD and PsaE to PSI. PSI is a plastocyanin-ferredoxin oxidoreductase, converting photonic excitation into a charge separation, which transfers an electron from the donor P700 chlorophyll pair to the spectroscopically characterized acceptors A0, A1, FX, FA and FB in turn. The chain is Photosystem I iron-sulfur center from Helianthus annuus (Common sunflower).